The chain runs to 78 residues: Consomatin Te1 (78 aa).

Residues 1–22 form the signal peptide; sequence MQTAYWMMVMMMVWITAPLSEG. A propeptide spanning residues 23-56 is cleaved from the precursor; it reads GQLNDVIRGLVPDNLAPQLVLQSLDSRRHPHGIR. The cysteines at positions 63 and 68 are disulfide-linked. At tryptophan 65 the chain carries D-tryptophan. 4-hydroxyproline occurs at positions 69, 70, and 72. Positions 74–78 are excised as a propeptide; it reads RRLGS.

Belongs to the conotoxin C superfamily. Consomatin family. Expressed by the venom duct.

The protein resides in the secreted. Moderately activates human somatostatin receptors (SSTR) with a preferential activation of SSTR1 and SSTR4. In vivo, does not cause behavioral changes in mice within a few minutes of intracranial injection, but causes a progressive loss of movement thereafter. Four to five hours after injection, mice recover, even with the highest dose tested. Shows antinociception and antihyperalgesia activities in two mouse models of acute pain, most probably by acting outside the central nervous system. In Conus terebra (Sea snail), this protein is Consomatin Te1.